A 283-amino-acid polypeptide reads, in one-letter code: MRQYLDLCQRIVDEGVWLENQRTGKRCLTVINADLTYNAAANEFPIITTRKSYWKAAIAEFLGYIRGYDNAADFRKLGAKTWDANANENQAWLNNPVRKGVDDMGRVYGVQGRAWRKPNGETVDQLRKIVDDLSRGIDDRGEILTFLNPGEFDLGCLRPCMYSHTFSLLGDTLYLTSYQRSCDVPLGLNFNQIQVFTFLALMAQITGKKPGQAYHKIVNAHIYEDQLDLMRDVQLKRRPFPSPRLEINPDIKTLEDLETWVTLDDFNVVGYECHEPIKYPFSV.

R22 lines the dUMP pocket. C160 (nucleophile) is an active-site residue. Residues 180–183, N191, and 221–223 each bind dUMP; these read RSCD and HIY. D183 lines the (6R)-5,10-methylene-5,6,7,8-tetrahydrofolate pocket. S282 serves as a coordination point for (6R)-5,10-methylene-5,6,7,8-tetrahydrofolate.

It belongs to the thymidylate synthase family. Bacterial-type ThyA subfamily. As to quaternary structure, homodimer.

Its subcellular location is the cytoplasm. It catalyses the reaction dUMP + (6R)-5,10-methylene-5,6,7,8-tetrahydrofolate = 7,8-dihydrofolate + dTMP. Its pathway is pyrimidine metabolism; dTTP biosynthesis. Its function is as follows. Catalyzes the reductive methylation of 2'-deoxyuridine-5'-monophosphate (dUMP) to 2'-deoxythymidine-5'-monophosphate (dTMP) while utilizing 5,10-methylenetetrahydrofolate (mTHF) as the methyl donor and reductant in the reaction, yielding dihydrofolate (DHF) as a by-product. This enzymatic reaction provides an intracellular de novo source of dTMP, an essential precursor for DNA biosynthesis. This Actinobacillus succinogenes (strain ATCC 55618 / DSM 22257 / CCUG 43843 / 130Z) protein is Thymidylate synthase.